We begin with the raw amino-acid sequence, 33 residues long: Brevinin-2 (33 aa).

An intrachain disulfide couples Cys27 to Cys33.

The protein belongs to the frog skin active peptide (FSAP) family. Brevinin subfamily. Expressed by the skin glands.

Its subcellular location is the secreted. Its function is as follows. Shows antibacterial activity against representative Gram-negative and Gram-positive bacterial species, and a very high hemolytic activity. This is Brevinin-2 from Pelophylax porosus brevipodus (Nagoya Daruma pond frog).